Reading from the N-terminus, the 473-residue chain is Trehalose-6-phosphate synthase (473 aa).

A D-glucose 6-phosphate-binding site is contributed by R10. 21–22 (GG) contacts UDP-alpha-D-glucose. D-glucose 6-phosphate is bound by residues Y76 and D130. 2 residues coordinate UDP-alpha-D-glucose: R262 and K267. A D-glucose 6-phosphate-binding site is contributed by R300. Residues F339 and 365–369 (LVAKE) contribute to the UDP-alpha-D-glucose site.

This sequence belongs to the glycosyltransferase 20 family. As to quaternary structure, homotetramer.

The enzyme catalyses D-glucose 6-phosphate + UDP-alpha-D-glucose = alpha,alpha-trehalose 6-phosphate + UDP + H(+). It functions in the pathway glycan biosynthesis; trehalose biosynthesis. Probably involved in the osmoprotection via the biosynthesis of trehalose. Catalyzes the transfer of glucose from UDP-alpha-D-glucose (UDP-Glc) to D-glucose 6-phosphate (Glc-6-P) to form trehalose-6-phosphate. Acts with retention of the anomeric configuration of the UDP-sugar donor. This Citrobacter koseri (strain ATCC BAA-895 / CDC 4225-83 / SGSC4696) protein is Trehalose-6-phosphate synthase.